The following is a 753-amino-acid chain: Polyribonucleotide nucleotidyltransferase (753 aa).

2 residues coordinate Mg(2+): D488 and D494. Positions P555–V614 constitute a KH domain. Positions G624 to R692 constitute an S1 motif domain. Positions L698–D719 are enriched in acidic residues. Positions L698–D753 are disordered. Positions G730–G740 are enriched in gly residues.

Belongs to the polyribonucleotide nucleotidyltransferase family. It depends on Mg(2+) as a cofactor.

Its subcellular location is the cytoplasm. It carries out the reaction RNA(n+1) + phosphate = RNA(n) + a ribonucleoside 5'-diphosphate. Functionally, involved in mRNA degradation. Catalyzes the phosphorolysis of single-stranded polyribonucleotides processively in the 3'- to 5'-direction. This chain is Polyribonucleotide nucleotidyltransferase, found in Rhodopirellula baltica (strain DSM 10527 / NCIMB 13988 / SH1).